The sequence spans 142 residues: Small ribosomal subunit protein bS6 (142 aa).

Residues 110 to 133 (NKKPSHAKEKHEKTEHTHSHHTEE) are compositionally biased toward basic and acidic residues. The disordered stretch occupies residues 110 to 142 (NKKPSHAKEKHEKTEHTHSHHTEETESVGSHSK).

Belongs to the bacterial ribosomal protein bS6 family.

Binds together with bS18 to 16S ribosomal RNA. In Helicobacter pylori (strain Shi470), this protein is Small ribosomal subunit protein bS6.